Consider the following 346-residue polypeptide: 26S proteasome non-ATPase regulatory subunit 4 (346 aa).

The VWFA domain occupies serine 5–valine 190. 2 UIM domains span residues glutamate 216–arginine 235 and threonine 273–alanine 292. Residues alanine 290–lysine 346 form a disordered region. The segment covering alanine 337–lysine 346 has biased composition (basic and acidic residues).

The protein belongs to the proteasome subunit S5A family. As to quaternary structure, the 26S proteasome is composed of a core protease, known as the 20S proteasome, capped at one or both ends by the 19S regulatory complex (RC). The RC is composed of at least 18 different subunits in two subcomplexes, the base and the lid, which form the portions proximal and distal to the 20S proteolytic core, respectively. In terms of tissue distribution, broadly expressed with high expression in the pharynx, intestine, hypodermis and spermatheca and weak expression in the excretory cell, body wall muscle, vulva and somatic gonad.

Its subcellular location is the cytoplasm. It is found in the nucleus. Binds and presumably selects ubiquitin-conjugates for destruction. Required for protein degradation and ubiquitin-proteasome system (UBS) function and regulates proteasomal subunit expression. Involvement in UBS might be cell type specific. Regulator of the autophagy-lysosome pathway that may confer resistance to autophagy by regulating the expression of autophagy-related proteins such as lgg-1, and by regulating lysosome formation, possibly by modulating elt-2 activity. Required for fertility, sperm production, and sex determination through regulation of tra-2 protein. Plays a role in the elimination of paternal mitochondria in fertilized eggs. In Caenorhabditis elegans, this protein is 26S proteasome non-ATPase regulatory subunit 4.